The sequence spans 471 residues: Tryptophanase (471 aa).

The residue at position 256 (lysine 256) is an N6-(pyridoxal phosphate)lysine.

This sequence belongs to the beta-eliminating lyase family. As to quaternary structure, homotetramer. Pyridoxal 5'-phosphate serves as cofactor.

The enzyme catalyses L-tryptophan + H2O = indole + pyruvate + NH4(+). It functions in the pathway amino-acid degradation; L-tryptophan degradation via pyruvate pathway; indole and pyruvate from L-tryptophan: step 1/1. This Salinibacter ruber (strain DSM 13855 / M31) protein is Tryptophanase.